A 196-amino-acid chain; its full sequence is Large ribosomal subunit protein bL25 (196 aa).

Belongs to the bacterial ribosomal protein bL25 family. CTC subfamily. In terms of assembly, part of the 50S ribosomal subunit; part of the 5S rRNA/L5/L18/L25 subcomplex. Contacts the 5S rRNA. Binds to the 5S rRNA independently of L5 and L18.

In terms of biological role, this is one of the proteins that binds to the 5S RNA in the ribosome where it forms part of the central protuberance. This Treponema pallidum subsp. pallidum (strain SS14) protein is Large ribosomal subunit protein bL25.